Reading from the N-terminus, the 350-residue chain is Uroporphyrinogen decarboxylase (350 aa).

Residues 23 to 27, Asp-73, Tyr-150, Thr-205, and His-322 each bind substrate; that span reads RQAGR.

It belongs to the uroporphyrinogen decarboxylase family. In terms of assembly, homodimer.

Its subcellular location is the cytoplasm. It carries out the reaction uroporphyrinogen III + 4 H(+) = coproporphyrinogen III + 4 CO2. Its pathway is porphyrin-containing compound metabolism; protoporphyrin-IX biosynthesis; coproporphyrinogen-III from 5-aminolevulinate: step 4/4. Functionally, catalyzes the decarboxylation of four acetate groups of uroporphyrinogen-III to yield coproporphyrinogen-III. The chain is Uroporphyrinogen decarboxylase from Methylococcus capsulatus (strain ATCC 33009 / NCIMB 11132 / Bath).